Here is a 90-residue protein sequence, read N- to C-terminus: Sec-independent protein translocase protein TatA (90 aa).

A helical membrane pass occupies residues 1-21 (MGLPGGWELVLIVGVLVLLFG). Residues 42–60 (EARGMKEDEEAAKREKQAK) are compositionally biased toward basic and acidic residues. Residues 42-90 (EARGMKEDEEAAKREKQAKSEPQQLTAGESSAPTVASPVEETQRNDSKK) form a disordered region. Polar residues predominate over residues 61–75 (SEPQQLTAGESSAPT).

It belongs to the TatA/E family. The Tat system comprises two distinct complexes: a TatABC complex, containing multiple copies of TatA, TatB and TatC subunits, and a separate TatA complex, containing only TatA subunits. Substrates initially bind to the TatABC complex, which probably triggers association of the separate TatA complex to form the active translocon.

The protein resides in the cell membrane. Its function is as follows. Part of the twin-arginine translocation (Tat) system that transports large folded proteins containing a characteristic twin-arginine motif in their signal peptide across membranes. TatA could form the protein-conducting channel of the Tat system. In Saccharopolyspora erythraea (strain ATCC 11635 / DSM 40517 / JCM 4748 / NBRC 13426 / NCIMB 8594 / NRRL 2338), this protein is Sec-independent protein translocase protein TatA.